Consider the following 409-residue polypeptide: Na(+)/H(+) antiporter NhaA 2 (409 aa).

Helical transmembrane passes span 10-30 (VAAG…NTPA), 60-80 (GLLV…FLAG), 89-109 (LVPA…YLAI), 118-138 (GWPV…AVFG), 148-168 (FLLA…AVFF), 171-191 (GLDL…AVVG), 203-223 (IAVV…TLSS), 224-244 (GIHA…LSGL), 257-277 (IVLP…IGLA), 283-303 (FWGI…AGGL), 328-348 (LLGG…FAGL), and 356-376 (TLAV…TLSI). The segment at 384–409 (AGAAADDDDATRDDFPAHADGGPARA) is disordered.

The protein belongs to the NhaA Na(+)/H(+) (TC 2.A.33) antiporter family.

The protein localises to the cell membrane. It catalyses the reaction Na(+)(in) + 2 H(+)(out) = Na(+)(out) + 2 H(+)(in). Its function is as follows. Na(+)/H(+) antiporter that extrudes sodium in exchange for external protons. The sequence is that of Na(+)/H(+) antiporter NhaA 2 from Clavibacter michiganensis subsp. michiganensis (strain NCPPB 382).